A 34-amino-acid polypeptide reads, in one-letter code: Protamine-Z1/Z2 (34 aa).

Positions proline 1–arginine 34 are disordered.

As to expression, testis.

The protein localises to the nucleus. It is found in the chromosome. In terms of biological role, protamines substitute for histones in the chromatin of sperm during the haploid phase of spermatogenesis. They compact sperm DNA into a highly condensed, stable and inactive complex. The sequence is that of Protamine-Z1/Z2 from Sarda orientalis (Striped bonito).